Here is a 446-residue protein sequence, read N- to C-terminus: tRNA-2-methylthio-N(6)-dimethylallyladenosine synthase (446 aa).

The MTTase N-terminal domain occupies 2-119 (KKIYIKTFGC…LPELIAQRRE (118 aa)). C11, C48, C82, C156, C160, and C163 together coordinate [4Fe-4S] cluster. Positions 142-376 (RVEGGAAFVS…RIEAQAQGVN (235 aa)) constitute a Radical SAM core domain. One can recognise a TRAM domain in the interval 377-440 (RSMVGSVQRV…PHSLRGEAVT (64 aa)).

The protein belongs to the methylthiotransferase family. MiaB subfamily. In terms of assembly, monomer. Requires [4Fe-4S] cluster as cofactor.

It is found in the cytoplasm. The catalysed reaction is N(6)-dimethylallyladenosine(37) in tRNA + (sulfur carrier)-SH + AH2 + 2 S-adenosyl-L-methionine = 2-methylsulfanyl-N(6)-dimethylallyladenosine(37) in tRNA + (sulfur carrier)-H + 5'-deoxyadenosine + L-methionine + A + S-adenosyl-L-homocysteine + 2 H(+). Catalyzes the methylthiolation of N6-(dimethylallyl)adenosine (i(6)A), leading to the formation of 2-methylthio-N6-(dimethylallyl)adenosine (ms(2)i(6)A) at position 37 in tRNAs that read codons beginning with uridine. This Thiobacillus denitrificans (strain ATCC 25259 / T1) protein is tRNA-2-methylthio-N(6)-dimethylallyladenosine synthase.